The chain runs to 284 residues: RCS-specific HTH-type transcriptional activator RclR (284 aa).

Cys-21 and Cys-89 form a disulfide bridge. The HTH araC/xylS-type domain occupies 177 to 278 (PRLGAVIQQM…GCTPGEYRER (102 aa)). 2 consecutive DNA-binding regions (H-T-H motif) follow at residues 197-218 (ESLA…RDVS) and 245-268 (VVVI…VREF).

Its activity is regulated as follows. Oxydation of Cys-21 leads to partial activation of RclR, followed by the formation of an intramolecular disulfide bond between Cys-21 and Cys-89, which stabilizes the active form of RclR. Involved in reactive chlorine species (RCS) stress resistance. Up-regulates, in response to hypochlorous acid (HOCl), the expression of three genes essential for survival of RCS stress (rclA, rclB and rclC) and its own expression. This chain is RCS-specific HTH-type transcriptional activator RclR (rclR), found in Escherichia coli (strain K12).